The primary structure comprises 266 residues: Undecaprenyl-diphosphatase (266 aa).

8 consecutive transmembrane segments (helical) span residues 4–24, 39–59, 88–108, 114–134, 147–167, 186–206, 214–234, and 246–266; these read ILRV…PISS, LPIV…IIYY, LNLI…GIFI, LFTF…LFLI, IFFS…PGIS, SLEI…FLKY, IIFN…FGLF, and SKLY…YFLV.

Belongs to the UppP family.

The protein resides in the cell inner membrane. It catalyses the reaction di-trans,octa-cis-undecaprenyl diphosphate + H2O = di-trans,octa-cis-undecaprenyl phosphate + phosphate + H(+). In terms of biological role, catalyzes the dephosphorylation of undecaprenyl diphosphate (UPP). Confers resistance to bacitracin. The sequence is that of Undecaprenyl-diphosphatase from Borrelia recurrentis (strain A1).